The primary structure comprises 349 residues: 3'-5' exoribonuclease 1 (349 aa).

Composition is skewed to basic and acidic residues over residues 1 to 10 and 22 to 35; these read MEDPQSKEPA and PRPE…RPSP. The segment at 1–48 is disordered; sequence MEDPQSKEPAGEAVALALLESPRPEGGEEPPRPSPEETQQCKFDGQET. S59 and S62 each carry phosphoserine. The SAP domain occupies 76–110; sequence INRMSKEELRAKLSEFKLETRGVKDVLKKRLKNYY. Residues 130–306 form the Exonuclease domain; sequence ICIIDFEATC…DDSKNIARIA (177 aa). Mg(2+) contacts are provided by D134 and E136. E136 functions as the Proton acceptor in the catalytic mechanism. Residues E136 and A137 each coordinate AMP. D234 is a Mg(2+) binding site. Residue H293 is the Proton acceptor of the active site. H293 contacts AMP. D298 is a Mg(2+) binding site.

In terms of assembly, identified in a histone pre-mRNA complex, at least composed of ERI1, LSM11, SLBP, SNRPB, SYNCRIP and YBX1. Interacts in a cooperative manner with SLBP to the mature 3'-end of histone mRNAs. Binds to 40S and 60S ribosomal subunits and to 80S assembled ribosomes. Found in a ternary complex with SLBP and the stem-loop structure of the 3'-end of histone mRNAs. Requires Mg(2+) as cofactor.

The protein resides in the cytoplasm. Its subcellular location is the nucleus. It is found in the nucleolus. It catalyses the reaction Exonucleolytic cleavage in the 3'- to 5'-direction to yield nucleoside 5'-phosphates.. With respect to regulation, although it can bind simultaneously with SLBP to the 3'-end of histone mRNA, the presence of SLBP prevents the exonuclease activity. Its function is as follows. RNA exonuclease that binds to the 3'-end of histone mRNAs and degrades them, suggesting that it plays an essential role in histone mRNA decay after replication. A 2' and 3'-hydroxyl groups at the last nucleotide of the histone 3'-end is required for efficient 3'-end histone mRNA exonuclease activity and degradation of RNA substrates. Also able to degrade the 3'-overhangs of short interfering RNAs (siRNAs) in vitro, suggesting a possible role as regulator of RNA interference (RNAi). Required for binding the 5'-ACCCA-3' sequence present in stem-loop structure. Able to bind other mRNAs. Required for 5.8S rRNA 3'-end processing. Also binds to 5.8s ribosomal RNA. Binds with high affinity to the stem-loop structure of replication-dependent histone pre-mRNAs. In vitro, does not have sequence specificity. In vitro, has weak DNA exonuclease activity. In vitro, shows biphasic kinetics such that there is rapid hydrolysis of the last three unpaired RNA nucleotides in the 39 flanking sequence followed by a much slower cleavage through the stem that occurs over a longer incubation period in the order of hours. ERI1-mediated RNA metabolism plays a key role in chondrogenesis. The chain is 3'-5' exoribonuclease 1 from Homo sapiens (Human).